A 500-amino-acid chain; its full sequence is Protein FAM83F (500 aa).

Ala-2 is subject to N-acetylalanine. The tract at residues 2–300 (AESQLNCLDE…LYAISEEVDL (299 aa)) is DUF1669. At Ser-4 the chain carries Phosphoserine. 3 disordered regions span residues 82-109 (NARGKSKAKAKAPAPAPAESGESLAYWP), 347-366 (QQREAGGNPEGQEEGASGGE), and 391-500 (IPLG…CVIS). A compositionally biased stretch (basic and acidic residues) spans 397-419 (SQKDGRMVSHMHRDLKPKSREAP). Low complexity-rich tracts occupy residues 425–442 (GEAARGEAAPARRFSSRL) and 458–468 (SSVSTETSEVE). Residues 477-500 (ENSSADISGKTSPSSAKPSNCVIS) are compositionally biased toward polar residues. Ser-479 is modified (phosphoserine).

This sequence belongs to the FAM83 family. In terms of assembly, directly interacts (via DUF1669) with CSNK1A1 and CSNK1A1L.

The protein resides in the cell membrane. This chain is Protein FAM83F (FAM83F), found in Homo sapiens (Human).